Here is a 365-residue protein sequence, read N- to C-terminus: Red-sensitive opsin (365 aa).

The Extracellular segment spans residues 1 to 51; sequence MASQLNEAIFAARRRNDDDDTTRSSVFTYTNSNNTRGPFEGPNYHIAPRWV. Asn-33 is a glycosylation site (N-linked (GlcNAc...) asparagine). Residues 52–76 form a helical membrane-spanning segment; sequence YNLTSIWMIFVVFASVFTNGLVIVA. Topologically, residues 77–88 are cytoplasmic; the sequence is TLKFKKLRHPLN. The chain crosses the membrane as a helical span at residues 89-113; the sequence is WILVNMAIADLGETVIASTISVFNQ. Residues 114 to 128 are Extracellular-facing; the sequence is IFGYFILGHPMCVLE. A disulfide bridge links Cys-125 with Cys-202. Residues 129–148 form a helical membrane-spanning segment; sequence GFTVSTCGITALWSLTVIAW. Residues 149-167 lie on the Cytoplasmic side of the membrane; sequence ERWFVVCKPFGNIKFDEKL. The chain crosses the membrane as a helical span at residues 168–191; it reads AATGIIFSWVWSAGWCAPPMFGWS. Residues 192-217 are Extracellular-facing; sequence RFWPHGLKTSCGPDVFSGSSDPGVQS. A helical transmembrane segment spans residues 218–245; the sequence is YMLVLMITCCIIPLAIIILCYLHVWWTI. Residues 246–267 are Cytoplasmic-facing; that stretch reads RQVAQQQKESESTQKAEREVSR. Residues 268-291 traverse the membrane as a helical segment; it reads MVVVMIVAYIFCWGPYTFFACFAA. Residues 292 to 299 are Extracellular-facing; it reads FSPGYSFH. A helical membrane pass occupies residues 300–324; that stretch reads PLAAALPAYFAKSATIYNPIIYVFM. Lys-311 is modified (N6-(retinylidene)lysine). Over 325–365 the chain is Cytoplasmic; the sequence is NRQFRNCIYQMFGKKVDDGSEVSSTSRTEVSSVSNSSVSPA. The tract at residues 342–365 is disordered; sequence DGSEVSSTSRTEVSSVSNSSVSPA. A compositionally biased stretch (low complexity) spans 345–365; the sequence is EVSSTSRTEVSSVSNSSVSPA.

The protein belongs to the G-protein coupled receptor 1 family. Opsin subfamily. Post-translationally, phosphorylated on some or all of the serine and threonine residues present in the C-terminal region.

It localises to the membrane. Its function is as follows. Visual pigments are the light-absorbing molecules that mediate vision. They consist of an apoprotein, opsin, covalently linked to cis-retinal. The protein is Red-sensitive opsin (opn1lw1) of Xenopus laevis (African clawed frog).